Reading from the N-terminus, the 530-residue chain is Berberine bridge enzyme-like 4 (530 aa).

Positions 1-19 (MKGTLSVLCLVLLVSVLEA) are cleaved as a signal peptide. C32 and C95 are joined by a disulfide. Residue N52 is glycosylated (N-linked (GlcNAc...) asparagine). The region spanning 73–247 (NYRKLLAIVA…LSWKINLVDV (175 aa)) is the FAD-binding PCMH-type domain. Positions 110–172 (HDYEGLSYMS…QTLAFPAGVC (63 aa)) form a cross-link, 6-(S-cysteinyl)-8alpha-(pros-histidyl)-FAD (His-Cys). N257, N292, N341, and N441 each carry an N-linked (GlcNAc...) asparagine glycan.

It belongs to the oxygen-dependent FAD-linked oxidoreductase family. FAD is required as a cofactor. Post-translationally, the FAD cofactor is bound via a bicovalent 6-S-cysteinyl, 8alpha-N1-histidyl FAD linkage.

The protein localises to the secreted. Its subcellular location is the cell wall. In terms of biological role, probable flavin-dependent oxidoreductase. The sequence is that of Berberine bridge enzyme-like 4 from Arabidopsis thaliana (Mouse-ear cress).